The following is a 286-amino-acid chain: Probable biotin transporter (286 aa).

EamA domains are found at residues 3 to 128 (YLLF…AIIR) and 139 to 277 (GFLL…LWVN). Transmembrane regions (helical) follow at residues 4–24 (LLFVTVLWAFSFNLIGEYLAG), 26–46 (VDSYFAVLTRVLLAGLVFLPL), 56–76 (FVGGVMLVGALQFGITYVCLY), 81–101 (VLTVPEVLLFTVLTPVHVALF), 109–129 (FNFWALAAALVAVLGAAIIRY), 136–156 (FLQGFLLLQLANATFAAGQVL), 174–194 (FGYFFVGALLVALPAWLLFGD), 203–223 (LQWGVLVWMGLLATALGQFWW), 234–254 (TLAVMNNLHVPVGLLLNLLIW), and 258–280 (ADLPRLALGGAVIVASLWVNRLG).

It belongs to the drug/metabolite transporter (DMT) superfamily. 10 TMS drug/metabolite exporter (DME) (TC 2.A.7.3) family.

Its subcellular location is the cell inner membrane. It catalyses the reaction biotin(in) = biotin(out). Its function is as follows. Uptake of biotin. The polypeptide is Probable biotin transporter (Pseudomonas aeruginosa (strain ATCC 15692 / DSM 22644 / CIP 104116 / JCM 14847 / LMG 12228 / 1C / PRS 101 / PAO1)).